A 357-amino-acid polypeptide reads, in one-letter code: Histidinol-phosphate aminotransferase (357 aa).

K222 bears the N6-(pyridoxal phosphate)lysine mark.

The protein belongs to the class-II pyridoxal-phosphate-dependent aminotransferase family. Histidinol-phosphate aminotransferase subfamily. As to quaternary structure, homodimer. It depends on pyridoxal 5'-phosphate as a cofactor.

The catalysed reaction is L-histidinol phosphate + 2-oxoglutarate = 3-(imidazol-4-yl)-2-oxopropyl phosphate + L-glutamate. The protein operates within amino-acid biosynthesis; L-histidine biosynthesis; L-histidine from 5-phospho-alpha-D-ribose 1-diphosphate: step 7/9. The sequence is that of Histidinol-phosphate aminotransferase from Leuconostoc mesenteroides subsp. mesenteroides (strain ATCC 8293 / DSM 20343 / BCRC 11652 / CCM 1803 / JCM 6124 / NCDO 523 / NBRC 100496 / NCIMB 8023 / NCTC 12954 / NRRL B-1118 / 37Y).